The primary structure comprises 158 residues: Ecotin-like protein 2 (158 aa).

It belongs to the protease inhibitor I11 (ecotin) family.

This is Ecotin-like protein 2 from Leishmania major.